Here is a 97-residue protein sequence, read N- to C-terminus: Large ribosomal subunit protein uL23 (97 aa).

It belongs to the universal ribosomal protein uL23 family. As to quaternary structure, part of the 50S ribosomal subunit. Contacts protein L29, and trigger factor when it is bound to the ribosome.

Functionally, one of the early assembly proteins it binds 23S rRNA. One of the proteins that surrounds the polypeptide exit tunnel on the outside of the ribosome. Forms the main docking site for trigger factor binding to the ribosome. The chain is Large ribosomal subunit protein uL23 from Mesorhizobium japonicum (strain LMG 29417 / CECT 9101 / MAFF 303099) (Mesorhizobium loti (strain MAFF 303099)).